A 583-amino-acid polypeptide reads, in one-letter code: Kelch-like protein 38 (583 aa).

The BTB domain maps to 34–101; that stretch reads TDVILCTEDK…IYTGSITITM (68 aa). One can recognise a BACK domain in the interval 136–237; the sequence is CLSMIRLSEI…HPTYLFQFIA (102 aa). Kelch repeat units lie at residues 285 to 332, 333 to 385, 386 to 433, 435 to 481, 482 to 523, and 525 to 575; these read TLVV…CIHS, ILYV…SYLH, FIFA…ANDQ, IYVF…VIED, KIYI…VINN, and LYVT…PLIC.

This chain is Kelch-like protein 38 (klhl38), found in Danio rerio (Zebrafish).